A 462-amino-acid chain; its full sequence is tRNA(Ile)-lysidine synthase (462 aa).

26 to 31 (SGGVDS) serves as a coordination point for ATP.

This sequence belongs to the tRNA(Ile)-lysidine synthase family.

It localises to the cytoplasm. It catalyses the reaction cytidine(34) in tRNA(Ile2) + L-lysine + ATP = lysidine(34) in tRNA(Ile2) + AMP + diphosphate + H(+). Ligates lysine onto the cytidine present at position 34 of the AUA codon-specific tRNA(Ile) that contains the anticodon CAU, in an ATP-dependent manner. Cytidine is converted to lysidine, thus changing the amino acid specificity of the tRNA from methionine to isoleucine. The sequence is that of tRNA(Ile)-lysidine synthase from Enterococcus faecalis (strain ATCC 700802 / V583).